A 199-amino-acid polypeptide reads, in one-letter code: Nucleoid occlusion factor SlmA (199 aa).

Positions 10–71 constitute an HTH tetR-type domain; the sequence is RNRREEILQA…SLIEFIEDSL (62 aa). The segment at residues 34–53 is a DNA-binding region (H-T-H motif); that stretch reads TTAKLAANVGVSEAALYRHF. Positions 120 to 140 form a coiled coil; the sequence is NRLQGRINQLFERIEVQIRQV.

The protein belongs to the nucleoid occlusion factor SlmA family. In terms of assembly, homodimer. Interacts with FtsZ.

The protein resides in the cytoplasm. The protein localises to the nucleoid. In terms of biological role, required for nucleoid occlusion (NO) phenomenon, which prevents Z-ring formation and cell division over the nucleoid. Acts as a DNA-associated cell division inhibitor that binds simultaneously chromosomal DNA and FtsZ, and disrupts the assembly of FtsZ polymers. SlmA-DNA-binding sequences (SBS) are dispersed on non-Ter regions of the chromosome, preventing FtsZ polymerization at these regions. This is Nucleoid occlusion factor SlmA from Photorhabdus laumondii subsp. laumondii (strain DSM 15139 / CIP 105565 / TT01) (Photorhabdus luminescens subsp. laumondii).